The chain runs to 114 residues: Large ribosomal subunit protein uL18 (114 aa).

This sequence belongs to the universal ribosomal protein uL18 family. In terms of assembly, part of the 50S ribosomal subunit; part of the 5S rRNA/L5/L18/L25 subcomplex. Contacts the 5S and 23S rRNAs.

This is one of the proteins that bind and probably mediate the attachment of the 5S RNA into the large ribosomal subunit, where it forms part of the central protuberance. In Bacteroides fragilis (strain ATCC 25285 / DSM 2151 / CCUG 4856 / JCM 11019 / LMG 10263 / NCTC 9343 / Onslow / VPI 2553 / EN-2), this protein is Large ribosomal subunit protein uL18.